A 291-amino-acid polypeptide reads, in one-letter code: Omega-amidase NIT3 (291 aa).

A CN hydrolase domain is found at 11-264 (IKVALVQLSG…EEIIYAELDP (254 aa)). Phosphothreonine is present on threonine 34. The active-site Proton acceptor is glutamate 53. Lysine 128 serves as the catalytic Proton donor. The active-site Nucleophile is the cysteine 169.

Belongs to the carbon-nitrogen hydrolase superfamily. NIT1/NIT2 family. Homodimer.

The catalysed reaction is a monoamide of a dicarboxylate + H2O = a dicarboxylate + NH4(+). Possesses omega-amidase activity. The role of omega-amidase is to remove potentially toxic intermediates by converting 2-oxoglutaramate and 2-oxosuccinamate to biologically useful 2-oxoglutarate and oxaloacetate, respectively. The polypeptide is Omega-amidase NIT3 (NIT3) (Saccharomyces cerevisiae (strain ATCC 204508 / S288c) (Baker's yeast)).